Reading from the N-terminus, the 366-residue chain is Mitochondrial carrier protein MTM1 (366 aa).

Solcar repeat units lie at residues 14-149 (ERML…IRDV), 156-250 (YPTL…CKER), and 266-359 (VHFI…SKKV). 6 helical membrane-spanning segments follow: residues 17-36 (LSAG…MDVV), 126-146 (SLTL…YEYI), 162-182 (LFCG…LELV), 229-249 (TLWR…LCKE), 268-286 (FINS…AICT), and 331-352 (LYTG…MISS).

It belongs to the mitochondrial carrier (TC 2.A.29) family.

The protein localises to the mitochondrion inner membrane. Its function is as follows. Involved in the mitochondrial activation of SOD2 by specifically facilitating insertion of the essential manganese cofactor. Has the ability to activate iron regulon in an iron-dependent manner. Responds to calorie restriction (CR) strength. In Saccharomyces cerevisiae (strain ATCC 204508 / S288c) (Baker's yeast), this protein is Mitochondrial carrier protein MTM1 (MTM1).